The following is a 299-amino-acid chain: CRISPR system Cms protein Csm4 (299 aa).

This sequence belongs to the CRISPR-associated Csm4 family. In terms of assembly, part of the Csm effector complex that includes at least Cas10(1), Csm2(3), Csm3(5), Csm4(1), Csm5(1) and mature crRNA. The Csm complex is elongated and slightly twisted with a maximal length of 215 Angstroms and a diameter of 75-80 Angstroms. It has been modeled to have a central protein filamant of Csm3 subunits along which the dsRNA helix of paired crRNA and target RNA binds. The filament is capped at one end by Cas10 and Csm4 and at the other end by Csm5; ssDNA is thought to bind to the N-terminal HD domain of Cas10. Csm with a precursor crRNA does not include Csm5, while Cas6, the enzyme probably involved in pre-crRNA processing, is found associated with a subset of the Csm complex.

Functionally, CRISPR (clustered regularly interspaced short palindromic repeat) is an adaptive immune system that provides protection against mobile genetic elements (viruses, transposable elements and conjugative plasmids). CRISPR clusters contain spacers, sequences complementary to antecedent mobile elements, and target invading nucleic acids. CRISPR clusters are transcribed and processed into CRISPR RNA (crRNA). The type III-A Csm effector complex binds crRNA and acts as a crRNA-guided RNase, DNase and cyclic oligoadenylate synthase; binding of target RNA cognate to the crRNA is required for all activities. In a heterologous host this Csm effector complex restricts ssRNA phage MS2, suggesting it may target RNA viruses in vivo. In terms of biological role, csm functions as a non-specific ssDNase. Base-pairing between crRNA and target RNA to form a ternary Csm complex activates a ssDNase activity; target RNA cleavage suppresses the ssDNase, a temporal control that prevents uncontrolled DNA degradation. Viral RNA transcripts probably tether the Csm complex to the viral genome, recruiting Cas10 ssDNA activity which is able to degrade DNA in the transcription bubble, spatially controlling the DNase activity. The subunit probably binds to the 5' handle of the crRNA, helping in discrimination between self- and non-self. This is CRISPR system Cms protein Csm4 from Streptococcus thermophilus.